We begin with the raw amino-acid sequence, 126 residues long: Holo-[acyl-carrier-protein] synthase (126 aa).

Mg(2+)-binding residues include Asp-9 and Glu-58.

The protein belongs to the P-Pant transferase superfamily. AcpS family. It depends on Mg(2+) as a cofactor.

It localises to the cytoplasm. The catalysed reaction is apo-[ACP] + CoA = holo-[ACP] + adenosine 3',5'-bisphosphate + H(+). Transfers the 4'-phosphopantetheine moiety from coenzyme A to a Ser of acyl-carrier-protein. This Escherichia coli (strain ATCC 8739 / DSM 1576 / NBRC 3972 / NCIMB 8545 / WDCM 00012 / Crooks) protein is Holo-[acyl-carrier-protein] synthase.